We begin with the raw amino-acid sequence, 465 residues long: 3-isopropylmalate dehydratase large subunit (465 aa).

[4Fe-4S] cluster-binding residues include Cys-346, Cys-406, and Cys-409.

The protein belongs to the aconitase/IPM isomerase family. LeuC type 1 subfamily. Heterodimer of LeuC and LeuD. Requires [4Fe-4S] cluster as cofactor.

It carries out the reaction (2R,3S)-3-isopropylmalate = (2S)-2-isopropylmalate. It functions in the pathway amino-acid biosynthesis; L-leucine biosynthesis; L-leucine from 3-methyl-2-oxobutanoate: step 2/4. Its function is as follows. Catalyzes the isomerization between 2-isopropylmalate and 3-isopropylmalate, via the formation of 2-isopropylmaleate. The chain is 3-isopropylmalate dehydratase large subunit from Leptospira interrogans serogroup Icterohaemorrhagiae serovar copenhageni (strain Fiocruz L1-130).